Here is a 159-residue protein sequence, read N- to C-terminus: Transcriptional repressor NrdR (159 aa).

A zinc finger lies at 3–34; it reads CPFCGGVENKVMDSRVSRDGNAIRRRRECLAC. Residues 49 to 139 form the ATP-cone domain; the sequence is PTVVKKDGRR…VYRQFRDVND (91 aa).

It belongs to the NrdR family. Requires Zn(2+) as cofactor.

Its function is as follows. Negatively regulates transcription of bacterial ribonucleotide reductase nrd genes and operons by binding to NrdR-boxes. The protein is Transcriptional repressor NrdR of Syntrophus aciditrophicus (strain SB).